A 146-amino-acid chain; its full sequence is Hemoglobin subunit beta (146 aa).

The Globin domain maps to His2 to His146. Residues His63 and His92 each coordinate heme b.

It belongs to the globin family. As to quaternary structure, heterotetramer of two alpha chains and two beta chains. Red blood cells.

Functionally, involved in oxygen transport from the lung to the various peripheral tissues. This Chloephaga melanoptera (Andean goose) protein is Hemoglobin subunit beta (HBB).